The primary structure comprises 90 residues: Small ribosomal subunit protein mS37 (90 aa).

An intrachain disulfide couples C27 to C58.

Belongs to the mitochondrion-specific ribosomal protein mS37 family. As to quaternary structure, component of the mitochondrial small ribosomal subunit (mt-SSU). Mature N.crassa 74S mitochondrial ribosomes consist of a small (37S) and a large (54S) subunit. The 37S small subunit contains a 16S ribosomal RNA (16S mt-rRNA) and 32 different proteins. The 54S large subunit contains a 23S rRNA (23S mt-rRNA) and 42 different proteins.

It localises to the mitochondrion. In terms of biological role, component of the mitochondrial ribosome (mitoribosome), a dedicated translation machinery responsible for the synthesis of mitochondrial genome-encoded proteins, including at least some of the essential transmembrane subunits of the mitochondrial respiratory chain. The mitoribosomes are attached to the mitochondrial inner membrane and translation products are cotranslationally integrated into the membrane. The sequence is that of Small ribosomal subunit protein mS37 (mrp10) from Neurospora crassa (strain ATCC 24698 / 74-OR23-1A / CBS 708.71 / DSM 1257 / FGSC 987).